We begin with the raw amino-acid sequence, 305 residues long: tRNA pseudouridine synthase B (305 aa).

Aspartate 48 acts as the Nucleophile in catalysis.

The protein belongs to the pseudouridine synthase TruB family. Type 1 subfamily.

It catalyses the reaction uridine(55) in tRNA = pseudouridine(55) in tRNA. Its function is as follows. Responsible for synthesis of pseudouridine from uracil-55 in the psi GC loop of transfer RNAs. The sequence is that of tRNA pseudouridine synthase B from Actinobacillus pleuropneumoniae serotype 5b (strain L20).